The primary structure comprises 557 residues: MRDYDEVTAFLGEWGPFQRLIFFLLSASIIPNGFNGMSIVFLAGTPEHRCLVPHTVNLSSAWRNHSIPLETKDGRQVPQKCRRYRLATIANFSELGLEPGRDVDLEQLEQESCLDGWEYDKDVFLSTIVTEWDLVCKDDWKAPLTTSLFFVGVLMGSFISGQLSDRFGRKNVLFLTMGMQTGFSFLQVFSVNFEMFTVLFVLVGMGQISNYVAAFVLGTEILSKSIRIIFATLGVCIFYAFGFMVLPLFAYFIRDWRMLLLALTVPGVLCGALWWFIPESPRWLISQGRIKEAEVIIRKAAKINGIVAPSTIFDPSELQDLNSTKPQLHHIYDLIRTRNIRVITIMSIILWLTISVGYFGLSLDTPNLHGDIYVNCFLLAAVEVPAYVLAWLLLQYLPRRYSISAALFLGGSVLLFMQLVPSELFYLSTALVMVGKFGITSAYSMVYVYTAELYPTVVRNMGVGVSSTASRLGSILSPYFVYLGAYDRFLPYILMGSLTILTAILTLFFPESFGVPLPDTIDQMLRVKGIKQWQIQSQTRMQKDGEESPTVLKSTAF.

Residues Met-1–Leu-20 lie on the Cytoplasmic side of the membrane. The helical transmembrane segment at Ile-21–Phe-41 threads the bilayer. Residues Leu-42–Ala-142 are Extracellular-facing. Residues Asn-57, Asn-64, and Asn-91 are each glycosylated (N-linked (GlcNAc...) asparagine). The chain crosses the membrane as a helical span at residues Pro-143–Leu-163. Residues Ser-164–Val-172 are Cytoplasmic-facing. Residues Leu-173 to Phe-193 form a helical membrane-spanning segment. The Extracellular segment spans residues Glu-194 to Thr-197. Residues Val-198–Gly-218 form a helical membrane-spanning segment. Position 218–225 (Gly-218–Ser-225) interacts with ATP. Topologically, residues Thr-219–Thr-232 are cytoplasmic. The helical transmembrane segment at Leu-233 to Ile-253 threads the bilayer. At Arg-254–Arg-257 the chain is on the extracellular side. A helical transmembrane segment spans residues Met-258 to Pro-278. Residues Glu-279 to Arg-341 lie on the Cytoplasmic side of the membrane. The helical transmembrane segment at Val-342–Ser-362 threads the bilayer. Residues Leu-363–Tyr-373 are Extracellular-facing. Residues Val-374–Leu-394 form a helical membrane-spanning segment. At Gln-395–Ala-406 the chain is on the cytoplasmic side. A helical membrane pass occupies residues Leu-407–Leu-427. The Extracellular portion of the chain corresponds to Ser-428–Ala-430. A helical membrane pass occupies residues Leu-431 to Ala-451. Residues Glu-452 to Gly-462 are Cytoplasmic-facing. The helical transmembrane segment at Val-463 to Leu-483 threads the bilayer. At Gly-484–Arg-488 the chain is on the extracellular side. The residue at position 486 (Tyr-486) is a Phosphotyrosine. A helical membrane pass occupies residues Phe-489 to Phe-509. Residues Pro-510–Phe-557 lie on the Cytoplasmic side of the membrane. The residue at position 548 (Ser-548) is a Phosphoserine. Thr-550 bears the Phosphothreonine mark.

The protein belongs to the major facilitator (TC 2.A.1) superfamily. Organic cation transporter (TC 2.A.1.19) family. As to quaternary structure, interacts with PDZK1. In terms of tissue distribution, widely expressed. Expressed in kidney, liver and testis. Expressed at the brush border of the small, large intestine and colon (at protein level).

It is found in the apical cell membrane. It localises to the basal cell membrane. The protein resides in the cell membrane. The enzyme catalyses (R)-carnitine(out) + Na(+)(out) = (R)-carnitine(in) + Na(+)(in). It carries out the reaction glycine betaine(out) + Na(+)(out) = glycine betaine(in) + Na(+)(in). The catalysed reaction is glycine betaine(out) + (R)-carnitine(in) = glycine betaine(in) + (R)-carnitine(out). It catalyses the reaction O-butanoyl-(R)-carnitine(out) + Na(+)(out) = O-butanoyl-(R)-carnitine(in) + Na(+)(in). The enzyme catalyses O-acetyl-(R)-carnitine(out) + Na(+)(out) = O-acetyl-(R)-carnitine(in) + Na(+)(in). It carries out the reaction O-propanoyl-(R)-carnitine(out) + Na(+)(out) = O-propanoyl-(R)-carnitine(in) + Na(+)(in). The catalysed reaction is (S)-carnitine(out) + Na(+)(out) = (S)-carnitine(in) + Na(+)(in). It catalyses the reaction an O-acyl-(R)-carnitine(out) + Na(+)(out) = an O-acyl-(R)-carnitine(in) + Na(+)(in). The enzyme catalyses L-glutamyl-L-arginyl-glycyl-L-methionyl-L-threonine(out) + Na(+)(out) = L-glutamyl-L-arginyl-glycyl-L-methionyl-L-threonine(in) + Na(+)(in). It carries out the reaction N,N-dimethylglycine(out) + Na(+)(out) = N,N-dimethylglycine(in) + Na(+)(in). Its activity is regulated as follows. Inhibited by emetine, quinidine and verapamil. The IC(50) of emetine is 4.2 uM. Not inhibited by valproic acid. Transport of (R)-carnitine is stimulated by cholesterol in the plasma membrane. Its function is as follows. Sodium-ion dependent, high affinity carnitine transporter. Involved in the active cellular uptake of carnitine. Transports one sodium ion with one molecule of carnitine. Also transports organic cations such as tetraethylammonium (TEA) without the involvement of sodium. Also relative uptake activity ratio of carnitine to TEA is 11.3. May also contribute to regulate the transport of organic compounds in testis across the blood-testis-barrier. The polypeptide is Organic cation/carnitine transporter 2 (Mus musculus (Mouse)).